Reading from the N-terminus, the 210-residue chain is Orotate phosphoribosyltransferase (210 aa).

Residues Arg-94, Lys-98, His-100, and Glu-120–Ser-128 contribute to the 5-phospho-alpha-D-ribose 1-diphosphate site. Residue Ser-124 participates in orotate binding.

It belongs to the purine/pyrimidine phosphoribosyltransferase family. PyrE subfamily. Homodimer. It depends on Mg(2+) as a cofactor.

The enzyme catalyses orotidine 5'-phosphate + diphosphate = orotate + 5-phospho-alpha-D-ribose 1-diphosphate. Its pathway is pyrimidine metabolism; UMP biosynthesis via de novo pathway; UMP from orotate: step 1/2. Catalyzes the transfer of a ribosyl phosphate group from 5-phosphoribose 1-diphosphate to orotate, leading to the formation of orotidine monophosphate (OMP). This is Orotate phosphoribosyltransferase from Bacillus cereus (strain B4264).